Consider the following 552-residue polypeptide: Ribulokinase (552 aa).

It belongs to the ribulokinase family.

The enzyme catalyses D-ribulose + ATP = D-ribulose 5-phosphate + ADP + H(+). It catalyses the reaction L-ribulose + ATP = L-ribulose 5-phosphate + ADP + H(+). Its pathway is carbohydrate degradation; L-arabinose degradation via L-ribulose; D-xylulose 5-phosphate from L-arabinose (bacterial route): step 2/3. The chain is Ribulokinase from Bacillus licheniformis (strain ATCC 14580 / DSM 13 / JCM 2505 / CCUG 7422 / NBRC 12200 / NCIMB 9375 / NCTC 10341 / NRRL NRS-1264 / Gibson 46).